Consider the following 209-residue polypeptide: Probable GTP-binding protein EngB (209 aa).

Residues glutamate 24–leucine 198 enclose the EngB-type G domain. GTP contacts are provided by residues glycine 32–serine 39, glycine 59–leucine 63, aspartate 77–glycine 80, threonine 144–aspartate 147, and phenylalanine 177–alanine 179. Residues serine 39 and threonine 61 each contribute to the Mg(2+) site.

Belongs to the TRAFAC class TrmE-Era-EngA-EngB-Septin-like GTPase superfamily. EngB GTPase family. Requires Mg(2+) as cofactor.

Functionally, necessary for normal cell division and for the maintenance of normal septation. This chain is Probable GTP-binding protein EngB, found in Thioalkalivibrio sulfidiphilus (strain HL-EbGR7).